Here is a 525-residue protein sequence, read N- to C-terminus: GMP synthase [glutamine-hydrolyzing] (525 aa).

The Glutamine amidotransferase type-1 domain maps to 9–207 (RILILDFGSQ…VRDICQCEAL (199 aa)). Cys-86 (nucleophile) is an active-site residue. Catalysis depends on residues His-181 and Glu-183. The 193-residue stretch at 208 to 400 (WTPAKIIDDA…LGLPYDMLYR (193 aa)) folds into the GMPS ATP-PPase domain. 235-241 (SGGVDSS) lines the ATP pocket.

Homodimer.

It carries out the reaction XMP + L-glutamine + ATP + H2O = GMP + L-glutamate + AMP + diphosphate + 2 H(+). The protein operates within purine metabolism; GMP biosynthesis; GMP from XMP (L-Gln route): step 1/1. Functionally, catalyzes the synthesis of GMP from XMP. In Shigella flexneri serotype 5b (strain 8401), this protein is GMP synthase [glutamine-hydrolyzing].